Reading from the N-terminus, the 138-residue chain is Nucleoside diphosphate kinase (138 aa).

ATP contacts are provided by Lys-9, Phe-57, Arg-85, Thr-91, Arg-102, and Asn-112. His-115 serves as the catalytic Pros-phosphohistidine intermediate.

The protein belongs to the NDK family. Homotetramer. Mg(2+) serves as cofactor.

The protein localises to the cytoplasm. The catalysed reaction is a 2'-deoxyribonucleoside 5'-diphosphate + ATP = a 2'-deoxyribonucleoside 5'-triphosphate + ADP. It carries out the reaction a ribonucleoside 5'-diphosphate + ATP = a ribonucleoside 5'-triphosphate + ADP. Major role in the synthesis of nucleoside triphosphates other than ATP. The ATP gamma phosphate is transferred to the NDP beta phosphate via a ping-pong mechanism, using a phosphorylated active-site intermediate. The protein is Nucleoside diphosphate kinase of Deinococcus geothermalis (strain DSM 11300 / CIP 105573 / AG-3a).